The following is a 104-amino-acid chain: Cytochrome c-551 (104 aa).

The signal sequence occupies residues 1 to 22 (MKPYALLSLLATGTLLAQGAWA). Cys-34, Cys-37, His-38, and Met-83 together coordinate heme c.

Post-translationally, binds 1 heme c group covalently per subunit.

Its subcellular location is the periplasm. In terms of biological role, electron donor for cytochrome cd1 in nitrite and nitrate respiration. In Pseudomonas aeruginosa (strain ATCC 15692 / DSM 22644 / CIP 104116 / JCM 14847 / LMG 12228 / 1C / PRS 101 / PAO1), this protein is Cytochrome c-551 (nirM).